We begin with the raw amino-acid sequence, 630 residues long: Putative F-box/LRR-repeat protein At3g49150 (630 aa).

The F-box domain occupies 15 to 63 (KDIISDLPEALICHILSFLPIEDSALTSVLSKKWQHLFAFRPNLEFDDA). 9 LRR repeats span residues 101–129 (CRDF…DLRC), 152–178 (RIET…YLNK), 180–205 (LLRH…FIMN), 228–253 (CEDV…VYHD), 300–325 (ISNV…QIPV), 337–362 (DQKA…IFDG), 406–436 (CDDY…KLFY), 437–465 (DTQI…FNAR), and 567–590 (DSSI…GLNW).

This is Putative F-box/LRR-repeat protein At3g49150 from Arabidopsis thaliana (Mouse-ear cress).